The chain runs to 222 residues: Pyridoxal phosphate homeostasis protein (222 aa).

At Lys-35 the chain carries N6-(pyridoxal phosphate)lysine.

Belongs to the pyridoxal phosphate-binding protein YggS/PROSC family.

Pyridoxal 5'-phosphate (PLP)-binding protein, which is involved in PLP homeostasis. The chain is Pyridoxal phosphate homeostasis protein from Helicobacter pylori (strain ATCC 700392 / 26695) (Campylobacter pylori).